A 70-amino-acid polypeptide reads, in one-letter code: DNA-directed RNA polymerase subunit epsilon (70 aa).

It belongs to the RNA polymerase subunit epsilon family. In terms of assembly, RNAP is composed of a core of 2 alpha, a beta and a beta' subunit. The core is associated with a delta subunit, and at least one of epsilon or omega. When a sigma factor is associated with the core the holoenzyme is formed, which can initiate transcription.

The catalysed reaction is RNA(n) + a ribonucleoside 5'-triphosphate = RNA(n+1) + diphosphate. In terms of biological role, a non-essential component of RNA polymerase (RNAP). This Lacticaseibacillus casei (strain BL23) (Lactobacillus casei) protein is DNA-directed RNA polymerase subunit epsilon.